The chain runs to 365 residues: Probable dual-specificity RNA methyltransferase RlmN (365 aa).

The active-site Proton acceptor is glutamate 99. One can recognise a Radical SAM core domain in the interval 105–344; sequence QSYGLSVCVT…CVVRQEHGTD (240 aa). An intrachain disulfide couples cysteine 112 to cysteine 349. Positions 119, 123, and 126 each coordinate [4Fe-4S] cluster. S-adenosyl-L-methionine-binding positions include 171 to 172, serine 203, 227 to 229, and asparagine 305; these read GE and SLH. The active-site S-methylcysteine intermediate is the cysteine 349.

This sequence belongs to the radical SAM superfamily. RlmN family. [4Fe-4S] cluster serves as cofactor.

It is found in the cytoplasm. The catalysed reaction is adenosine(2503) in 23S rRNA + 2 reduced [2Fe-2S]-[ferredoxin] + 2 S-adenosyl-L-methionine = 2-methyladenosine(2503) in 23S rRNA + 5'-deoxyadenosine + L-methionine + 2 oxidized [2Fe-2S]-[ferredoxin] + S-adenosyl-L-homocysteine. It catalyses the reaction adenosine(37) in tRNA + 2 reduced [2Fe-2S]-[ferredoxin] + 2 S-adenosyl-L-methionine = 2-methyladenosine(37) in tRNA + 5'-deoxyadenosine + L-methionine + 2 oxidized [2Fe-2S]-[ferredoxin] + S-adenosyl-L-homocysteine. Its function is as follows. Specifically methylates position 2 of adenine 2503 in 23S rRNA and position 2 of adenine 37 in tRNAs. This is Probable dual-specificity RNA methyltransferase RlmN from Lactococcus lactis subsp. cremoris (strain MG1363).